The following is a 504-amino-acid chain: Catalase (504 aa).

Positions 1 to 25 (MSKQDGKLTGLFGAPVSDRENSMTA) are disordered. Active-site residues include His-56 and Asn-129. Tyr-339 contributes to the heme binding site.

It belongs to the catalase family. Homodimer. Requires heme as cofactor.

It catalyses the reaction 2 H2O2 = O2 + 2 H2O. Its function is as follows. Decomposes hydrogen peroxide into water and oxygen; serves to protect cells from the toxic effects of hydrogen peroxide. This chain is Catalase (katA), found in Staphylococcus epidermidis (strain ATCC 35984 / DSM 28319 / BCRC 17069 / CCUG 31568 / BM 3577 / RP62A).